The chain runs to 446 residues: Tubulin beta-6 chain (446 aa).

Positions 1 to 4 (MREI) match the MREI motif motif. Positions 11, 69, 138, 142, 143, and 144 each coordinate GTP. Glutamate 69 provides a ligand contact to Mg(2+). A Phosphoserine; by CDK1 modification is found at serine 172. Positions 204 and 226 each coordinate GTP. Glutamate 438 is modified (5-glutamyl polyglutamate).

It belongs to the tubulin family. Dimer of alpha and beta chains. A typical microtubule is a hollow water-filled tube with an outer diameter of 25 nm and an inner diameter of 15 nM. Alpha-beta heterodimers associate head-to-tail to form protofilaments running lengthwise along the microtubule wall with the beta-tubulin subunit facing the microtubule plus end conferring a structural polarity. Microtubules usually have 13 protofilaments but different protofilament numbers can be found in some organisms and specialized cells. Mg(2+) serves as cofactor. Some glutamate residues at the C-terminus are polyglycylated, resulting in polyglycine chains on the gamma-carboxyl group. Glycylation is mainly limited to tubulin incorporated into axonemes (cilia and flagella) whereas glutamylation is prevalent in neuronal cells, centrioles, axonemes, and the mitotic spindle. Both modifications can coexist on the same protein on adjacent residues, and lowering polyglycylation levels increases polyglutamylation, and reciprocally. Cilia and flagella glycylation is required for their stability and maintenance. Flagella glycylation controls sperm motility. In terms of processing, some glutamate residues at the C-terminus are polyglutamylated, resulting in polyglutamate chains on the gamma-carboxyl group. Polyglutamylation plays a key role in microtubule severing by spastin (SPAST). SPAST preferentially recognizes and acts on microtubules decorated with short polyglutamate tails: severing activity by SPAST increases as the number of glutamates per tubulin rises from one to eight, but decreases beyond this glutamylation threshold. Glutamylation is also involved in cilia motility. Post-translationally, phosphorylated on Ser-172 by CDK1 during the cell cycle, from metaphase to telophase, but not in interphase. This phosphorylation inhibits tubulin incorporation into microtubules.

The protein localises to the cytoplasm. The protein resides in the cytoskeleton. Its function is as follows. Tubulin is the major constituent of microtubules, a cylinder consisting of laterally associated linear protofilaments composed of alpha- and beta-tubulin heterodimers. Microtubules grow by the addition of GTP-tubulin dimers to the microtubule end, where a stabilizing cap forms. Below the cap, tubulin dimers are in GDP-bound state, owing to GTPase activity of alpha-tubulin. This chain is Tubulin beta-6 chain (TUBB6), found in Bos taurus (Bovine).